The sequence spans 350 residues: C5a anaphylatoxin chemotactic receptor 1 (350 aa).

The Extracellular portion of the chain corresponds to 1–37 (MDDMCSILTEEELSLYNITDCEFVKPGGLGPVLGPRH). Asparagine 17 is a glycosylation site (N-linked (GlcNAc...) asparagine). Residues 38 to 64 (LSALVFYGLVFLLGVPGNALVVWVTGF) form a helical membrane-spanning segment. Residues 65 to 69 (RMPRS) lie on the Cytoplasmic side of the membrane. The chain crosses the membrane as a helical span at residues 70-93 (VTSLWFLNLALADLLCCLSLPLLM). Residues 94-110 (VPLAMDQHWPFGPVACK) are Extracellular-facing. Cysteines 109 and 187 form a disulfide. The helical transmembrane segment at 111–132 (LLKGLLYLIMFCSVLLLVLISL) threads the bilayer. Over 133 to 154 (DRFLLVSWPVWCQNWRRPRKAG) the chain is Cytoplasmic. Residues 155–174 (WVCVGVWLLALLGSIPQFVY) traverse the membrane as a helical segment. The Extracellular segment spans residues 175-197 (VKEVQLSTSKSECLGLYTVASAW). Residues 198–223 (ANTTARFLVGFVLPFITIVTCHWVVY) traverse the membrane as a helical segment. Over 224-247 (SRARRGSGVGPGRVSEARSRRTLR) the chain is Cytoplasmic. The chain crosses the membrane as a helical span at residues 248–270 (VIVAVSLSFFLCWFPLHILDFLV). The Extracellular segment spans residues 271–287 (LSTPRHSSHSANIQLAH). The chain crosses the membrane as a helical span at residues 288–308 (TLALCLAYCNSCLNPLLYVCL). The Cytoplasmic segment spans residues 309 to 350 (GRGFKQNINRSLRNMFNFATEESVTRQSMFKSTSERTQEMNM).

The protein belongs to the G-protein coupled receptor 1 family. As to expression, high expression in head, kidney and posterior kidney, lower levels in peripheral blood leukocytes and spleen, low expression in brain and gills, heart, intestine and very low expression in liver and muscle.

It is found in the cell membrane. Receptor for the chemotactic and inflammatory peptide anaphylatoxin C5a. This receptor stimulates chemotaxis, granule enzyme release and superoxide anion production. The protein is C5a anaphylatoxin chemotactic receptor 1 (c5ar1) of Oncorhynchus mykiss (Rainbow trout).